A 262-amino-acid polypeptide reads, in one-letter code: MLDPIAIQLGPLAIRWYALCIVTGLILAVYLTMKEAPRKKIIPDDILDFILVAFPLAILGARLYYVIFRFDYYSQNLGEIFAIWNGGLAIYGGLITGALVLYIFADRKLINTWDFLDIAAPSVMIAQSLGRWGNFFNQEAYGATVDNLDYLPGFIRDQMYIEGSYRQPTFLYESLWNLLGFALILIFRRKWKSLRRGHITAFYLIWYGFGRMVIEGMRTDSLMFFSLRVSQWLSVVLIGLGIMIVIYQNRKKAPYYITEEEK.

The next 4 helical transmembrane spans lie at 9–29 (LGPL…ILAV), 41–61 (IIPD…ILGA), 80–100 (IFAI…GALV), and 109–129 (LINT…AQSL). Arg-131 serves as a coordination point for a 1,2-diacyl-sn-glycero-3-phospho-(1'-sn-glycerol). The next 3 membrane-spanning stretches (helical) occupy residues 167-187 (QPTF…ILIF), 197-217 (GHIT…IEGM), and 227-247 (LRVS…IVIY).

The protein belongs to the Lgt family.

Its subcellular location is the cell membrane. It carries out the reaction L-cysteinyl-[prolipoprotein] + a 1,2-diacyl-sn-glycero-3-phospho-(1'-sn-glycerol) = an S-1,2-diacyl-sn-glyceryl-L-cysteinyl-[prolipoprotein] + sn-glycerol 1-phosphate + H(+). It participates in protein modification; lipoprotein biosynthesis (diacylglyceryl transfer). Its function is as follows. Catalyzes the transfer of the diacylglyceryl group from phosphatidylglycerol to the sulfhydryl group of the N-terminal cysteine of a prolipoprotein, the first step in the formation of mature lipoproteins. The polypeptide is Phosphatidylglycerol--prolipoprotein diacylglyceryl transferase (Streptococcus pneumoniae (strain JJA)).